Reading from the N-terminus, the 92-residue chain is Putative regulatory protein CKL_1364 (92 aa).

Belongs to the RemA family.

This chain is Putative regulatory protein CKL_1364, found in Clostridium kluyveri (strain ATCC 8527 / DSM 555 / NBRC 12016 / NCIMB 10680 / K1).